We begin with the raw amino-acid sequence, 238 residues long: Ion-translocating oxidoreductase complex subunit E (238 aa).

Helical transmembrane passes span 20-40 (ALVQ…VVNA), 41-61 (LGLG…VSLI), 72-92 (PAFV…MKAF), 95-115 (ELYQ…AVLG), 130-150 (AVDG…VGAV), and 185-205 (NVIF…LIAA).

The protein belongs to the NqrDE/RnfAE family. As to quaternary structure, the complex is composed of six subunits: RnfA, RnfB, RnfC, RnfD, RnfE and RnfG.

The protein resides in the cell inner membrane. Part of a membrane-bound complex that couples electron transfer with translocation of ions across the membrane. This is Ion-translocating oxidoreductase complex subunit E from Cellvibrio japonicus (strain Ueda107) (Pseudomonas fluorescens subsp. cellulosa).